Consider the following 426-residue polypeptide: Large envelope protein (426 aa).

A lipid anchor (N-myristoyl glycine; by host) is attached at G2. The interval 2–143 is pre-S1; the sequence is GNNIKVTFNP…PPLRDTHPHL (142 aa). Residues 2–202 form a pre-S region; that stretch reads GNNIKVTFNP…PSTTGDPAQS (201 aa). Residues 2 to 209 are Virion surface; in external conformation-facing; the sequence is GNNIKVTFNP…AQSPEMSPSS (208 aa). The Intravirion; in internal conformation portion of the chain corresponds to 2-281; it reads GNNIKVTFNP…NGFRWMYLRR (280 aa). N3 carries N-linked (GlcNAc...) asparagine glycosylation. The tract at residues 107–142 is disordered; it reads IRDIPRGLVPPQTPTNRDQGRKPTPPTPPLRDTHPH. The tract at residues 144 to 202 is pre-S2; sequence TMKNQTFHLQGFVDGLRDLTTTERQHNAYGDPFTTLSPVVPTVSTILSPPSTTGDPAQS. A helical transmembrane segment spans residues 210–230; sequence LLGLLAGLQVVYFLWTKILTI. Topologically, residues 231 to 281 are intravirion; in external conformation; the sequence is AQNLDWWWTSLSFPGGIPECTGQNSQFQTCKHLPTSCPPTCNGFRWMYLRR. Residues 282–302 traverse the membrane as a helical segment; sequence FIIYLLVLLLCLIFLLVLLDW. At 303-374 the chain is on the virion surface side; sequence KGLIPVCPIQ…WALARFSWLN (72 aa). N346 carries an N-linked (GlcNAc...) asparagine; by host glycan. A helical membrane pass occupies residues 375 to 395; that stretch reads LLVPLLQWLGGISLIAWFLLI. Residues 396-401 lie on the Intravirion side of the membrane; sequence WMIWFW. Residues 402 to 424 form a helical membrane-spanning segment; the sequence is GPALLSILPPFIPIFVLFFLIWV. Topologically, residues 425–426 are virion surface; that stretch reads YI.

This sequence belongs to the orthohepadnavirus major surface antigen family. In its internal form (Li-HBsAg), interacts with the capsid protein and with the isoform S. Interacts with host chaperone CANX. As to quaternary structure, associates with host chaperone CANX through its pre-S2 N glycan; this association may be essential for isoform M proper secretion. In terms of assembly, interacts with isoform L. Interacts with the antigens of satellite virus HDV (HDVAgs); this interaction is required for encapsidation of HDV genomic RNA. Post-translationally, isoform M is N-terminally acetylated by host at a ratio of 90%, and N-glycosylated by host at the pre-S2 region. In terms of processing, myristoylated.

The protein localises to the virion membrane. In terms of biological role, the large envelope protein exists in two topological conformations, one which is termed 'external' or Le-HBsAg and the other 'internal' or Li-HBsAg. In its external conformation the protein attaches the virus to cell receptors and thereby initiating infection. This interaction determines the species specificity and liver tropism. This attachment induces virion internalization predominantly through caveolin-mediated endocytosis. The large envelope protein also assures fusion between virion membrane and endosomal membrane. In its internal conformation the protein plays a role in virion morphogenesis and mediates the contact with the nucleocapsid like a matrix protein. The middle envelope protein plays an important role in the budding of the virion. It is involved in the induction of budding in a nucleocapsid independent way. In this process the majority of envelope proteins bud to form subviral lipoprotein particles of 22 nm of diameter that do not contain a nucleocapsid. The sequence is that of Large envelope protein from Marmota monax (Woodchuck).